The sequence spans 461 residues: Photosystem II CP43 reaction center protein (461 aa).

Positions 1-2 (ME) are excised as a propeptide. T3 carries the N-acetylthreonine modification. Residue T3 is modified to Phosphothreonine. A run of 5 helical transmembrane segments spans residues 57-81 (LFEVAHFVPEKPMYEQGLILLPHLA), 122-143 (LLGPETLEESFPFFGYVWKDRN), 166-188 (KALYFGGVYDTWAPGGGDVRKIT), 243-263 (KPFAWARRAFVWSGEAYLSYS), and 279-300 (WFNNTAYPSEFYGPTGPEASQA). E355 lines the [CaMn4O5] cluster pocket. The helical transmembrane segment at 435 to 459 (RARAAAAGFEKGIDRDLEPVLSMTP) threads the bilayer.

This sequence belongs to the PsbB/PsbC family. PsbC subfamily. In terms of assembly, PSII is composed of 1 copy each of membrane proteins PsbA, PsbB, PsbC, PsbD, PsbE, PsbF, PsbH, PsbI, PsbJ, PsbK, PsbL, PsbM, PsbT, PsbX, PsbY, PsbZ, Psb30/Ycf12, at least 3 peripheral proteins of the oxygen-evolving complex and a large number of cofactors. It forms dimeric complexes. Requires Binds multiple chlorophylls and provides some of the ligands for the Ca-4Mn-5O cluster of the oxygen-evolving complex. It may also provide a ligand for a Cl- that is required for oxygen evolution. PSII binds additional chlorophylls, carotenoids and specific lipids. as cofactor.

It localises to the plastid. Its subcellular location is the chloroplast thylakoid membrane. Its function is as follows. One of the components of the core complex of photosystem II (PSII). It binds chlorophyll and helps catalyze the primary light-induced photochemical processes of PSII. PSII is a light-driven water:plastoquinone oxidoreductase, using light energy to abstract electrons from H(2)O, generating O(2) and a proton gradient subsequently used for ATP formation. This is Photosystem II CP43 reaction center protein from Ceratophyllum demersum (Rigid hornwort).